We begin with the raw amino-acid sequence, 202 residues long: MKTFRSMLISLLLVAITTTSGVVEGNYVVYDGEGDQVKPNVPYYISFMTSDYNMWICRKKWRSNDPNSCPQQPLMVTHPNMAAPTPVMFVLSNKSETVVRESAKLKIKFVDPRPCGESGFWRVVQRTSSEGEVVLNGSESTSDNASTFAIEQTNEYYKFTFGDGPDYLTTISLSNDYPIYRLLSKKFSGEMEIYFYKNLTMG.

Residues 1–25 form the signal peptide; it reads MKTFRSMLISLLLVAITTTSGVVEG. C69 and C115 form a disulfide bridge. N-linked (GlcNAc...) asparagine glycans are attached at residues N93, N136, N144, and N198.

This sequence belongs to the protease inhibitor I3 (leguminous Kunitz-type inhibitor) family.

In terms of biological role, exhibits Kunitz trypsin protease inhibitor activity. The protein is Kunitz trypsin inhibitor 7 of Arabidopsis thaliana (Mouse-ear cress).